We begin with the raw amino-acid sequence, 554 residues long: Hydroxylamine reductase (554 aa).

Positions 3, 6, 18, and 25 each coordinate [2Fe-2S] cluster. Hybrid [4Fe-2O-2S] cluster-binding residues include His252, Glu276, Cys320, Cys408, Cys436, Cys461, Glu495, and Lys497. The residue at position 408 (Cys408) is a Cysteine persulfide.

This sequence belongs to the HCP family. [2Fe-2S] cluster is required as a cofactor. Hybrid [4Fe-2O-2S] cluster serves as cofactor.

The protein resides in the cytoplasm. It catalyses the reaction A + NH4(+) + H2O = hydroxylamine + AH2 + H(+). Its function is as follows. Catalyzes the reduction of hydroxylamine to form NH(3) and H(2)O. The chain is Hydroxylamine reductase from Shewanella amazonensis (strain ATCC BAA-1098 / SB2B).